Consider the following 156-residue polypeptide: Small ribosomal subunit protein uS7c (156 aa).

Belongs to the universal ribosomal protein uS7 family. In terms of assembly, part of the 30S ribosomal subunit.

Its subcellular location is the plastid. It localises to the chloroplast. Functionally, one of the primary rRNA binding proteins, it binds directly to 16S rRNA where it nucleates assembly of the head domain of the 30S subunit. The polypeptide is Small ribosomal subunit protein uS7c (rps7) (Zamia furfuracea (Cardboard cycad)).